Here is a 73-residue protein sequence, read N- to C-terminus: Antimicrobial peptide 143 (73 aa).

An N-terminal signal peptide occupies residues 1 to 22 (MKVKCLLAVFLIVLIAAEHCQA). At Lys38 the chain carries Lysine amide. A propeptide spanning residues 44 to 73 (ELGTQFRPQQKNFMRREIDLERLFAEMPDY) is cleaved from the precursor.

Belongs to the non-disulfide-bridged peptide (NDBP) superfamily. Short antimicrobial peptide (group 4) family. As to expression, expressed by the venom gland.

The protein localises to the secreted. It localises to the target cell membrane. Functionally, cationic host defense peptide that have antibacterial activity by breaking membranes. Is more effective on Gram-positive than on Gram-negative bacteria. The polypeptide is Antimicrobial peptide 143 (Lychas mucronatus (Chinese swimming scorpion)).